The following is a 1170-amino-acid chain: DNA-directed RNA polymerase subunit beta (1170 aa).

This sequence belongs to the RNA polymerase beta chain family. The RNAP catalytic core consists of 2 alpha, 1 beta, 1 beta' and 1 omega subunit. When a sigma factor is associated with the core the holoenzyme is formed, which can initiate transcription.

It catalyses the reaction RNA(n) + a ribonucleoside 5'-triphosphate = RNA(n+1) + diphosphate. Its function is as follows. DNA-dependent RNA polymerase catalyzes the transcription of DNA into RNA using the four ribonucleoside triphosphates as substrates. This chain is DNA-directed RNA polymerase subunit beta, found in Corynebacterium urealyticum (strain ATCC 43042 / DSM 7109).